A 378-amino-acid chain; its full sequence is Geraniol dehydrogenase (378 aa).

Residues cysteine 48, histidine 75, cysteine 105, cysteine 108, cysteine 111, cysteine 119, and cysteine 179 each coordinate Zn(2+).

It belongs to the zinc-containing alcohol dehydrogenase family. As to quaternary structure, monomer. The cofactor is Zn(2+).

The catalysed reaction is (2E)-geraniol + NAD(+) = (2E)-geranial + NADH + H(+). The enzyme catalyses (2E,6E)-farnesol + NAD(+) = (2E,6E)-farnesal + NADH + H(+). Functionally, catalyzes the NAD(+)-dependent oxidation of geraniol to geranial, playing an important role in the biosynthesis of neral, an alarm pheromone. Cannot use NADP(+). Also acts as a farnesol dehydrogenase by catalyzing the oxidation of (2E,6E)-farnesol to (2E,6E)-farnesal, with lower activity compared to geraniol dehydrogenase activity. This Carpoglyphus lactis (Dried fruit mite) protein is Geraniol dehydrogenase.